The sequence spans 346 residues: Peripherin-2 (346 aa).

The Cytoplasmic segment spans residues 1 to 18 (MALLKVKFDQKKRVKLAQ). Residues 19–41 (GLWLMNWFSVLAGIIIFGLGLFL) traverse the membrane as a helical segment. The Lumenal segment spans residues 42 to 62 (KIELRKRSDVMNNSESHFVPN). A glycan (N-linked (GlcNAc...) asparagine) is linked at Asn53. The helical transmembrane segment at 63–79 (SLIGVGVLSCVFNSLAG) threads the bilayer. Topologically, residues 80–101 (KICYDALDPAKYAKWKPWLKPY) are cytoplasmic. A helical membrane pass occupies residues 102–122 (LAVCVLFNVVLFLVALCCFLL). The Lumenal segment spans residues 123 to 264 (RGSLESTLAH…LSYYSNLMNT (142 aa)). 2 N-linked (GlcNAc...) asparagine glycosylation sites follow: Asn229 and Asn263. The chain crosses the membrane as a helical span at residues 265-283 (TGAVTLLVWLFEVTITVGL). The Cytoplasmic segment spans residues 284-346 (RYLHTALEGM…EDAGQAPAAG (63 aa)). The interaction with MREG stretch occupies residues 341–346 (QAPAAG).

It belongs to the PRPH2/ROM1 family. In terms of assembly, homodimer; disulfide-linked. Forms a homotetramer. Forms a heterotetramer with ROM1. Homotetramer and heterotetramer core complexes go on to form higher order complexes by formation of intermolecular disulfide bonds. Interacts with MREG. Interacts with STX3. Interacts with SNAP25. In terms of tissue distribution, retina (photoreceptor). In rim region of ROS (rod outer segment) disks.

The protein localises to the membrane. Its subcellular location is the cell projection. The protein resides in the cilium. It localises to the photoreceptor outer segment. It is found in the photoreceptor inner segment. Its function is as follows. Essential for retina photoreceptor outer segment disk morphogenesis, may also play a role with ROM1 in the maintenance of outer segment disk structure. Required for the maintenance of retinal outer nuclear layer thickness. Required for the correct development and organization of the photoreceptor inner segment. This Bos taurus (Bovine) protein is Peripherin-2 (PRPH2).